The sequence spans 356 residues: tRNA N6-adenosine threonylcarbamoyltransferase (356 aa).

Residues His-115 and His-119 each contribute to the Fe cation site. Substrate-binding positions include 138-142 (LVSGG), Asp-171, Gly-184, and Asn-283. Asp-311 provides a ligand contact to Fe cation.

Belongs to the KAE1 / TsaD family. Fe(2+) serves as cofactor.

The protein resides in the cytoplasm. The enzyme catalyses L-threonylcarbamoyladenylate + adenosine(37) in tRNA = N(6)-L-threonylcarbamoyladenosine(37) in tRNA + AMP + H(+). Required for the formation of a threonylcarbamoyl group on adenosine at position 37 (t(6)A37) in tRNAs that read codons beginning with adenine. Is involved in the transfer of the threonylcarbamoyl moiety of threonylcarbamoyl-AMP (TC-AMP) to the N6 group of A37, together with TsaE and TsaB. TsaD likely plays a direct catalytic role in this reaction. This Prochlorococcus marinus (strain MIT 9215) protein is tRNA N6-adenosine threonylcarbamoyltransferase.